We begin with the raw amino-acid sequence, 266 residues long: Undecaprenyl-diphosphatase (266 aa).

8 helical membrane passes run 4-24, 39-59, 88-108, 114-134, 147-167, 186-206, 214-234, and 246-266; these read ILRV…PISS, LPIV…IIYY, LNLI…GIFI, LFTF…LFLI, IFFS…PGIS, SLEI…FLKY, IIFN…FGLF, and SKLY…YFLV.

Belongs to the UppP family.

The protein resides in the cell inner membrane. It carries out the reaction di-trans,octa-cis-undecaprenyl diphosphate + H2O = di-trans,octa-cis-undecaprenyl phosphate + phosphate + H(+). Catalyzes the dephosphorylation of undecaprenyl diphosphate (UPP). Confers resistance to bacitracin. This is Undecaprenyl-diphosphatase from Borrelia recurrentis (strain A1).